Here is a 152-residue protein sequence, read N- to C-terminus: SsrA-binding protein (152 aa).

It belongs to the SmpB family.

It is found in the cytoplasm. Its function is as follows. Required for rescue of stalled ribosomes mediated by trans-translation. Binds to transfer-messenger RNA (tmRNA), required for stable association of tmRNA with ribosomes. tmRNA and SmpB together mimic tRNA shape, replacing the anticodon stem-loop with SmpB. tmRNA is encoded by the ssrA gene; the 2 termini fold to resemble tRNA(Ala) and it encodes a 'tag peptide', a short internal open reading frame. During trans-translation Ala-aminoacylated tmRNA acts like a tRNA, entering the A-site of stalled ribosomes, displacing the stalled mRNA. The ribosome then switches to translate the ORF on the tmRNA; the nascent peptide is terminated with the 'tag peptide' encoded by the tmRNA and targeted for degradation. The ribosome is freed to recommence translation, which seems to be the essential function of trans-translation. The protein is SsrA-binding protein of Rickettsia massiliae (strain Mtu5).